The chain runs to 149 residues: Probable glycine cleavage system H protein 2 (149 aa).

The 83-residue stretch at 32–114 (IAVVGITDLA…YGQGWIAKIK (83 aa)) folds into the Lipoyl-binding domain. Lysine 73 is subject to N6-lipoyllysine.

This sequence belongs to the GcvH family. As to quaternary structure, the glycine cleavage system is composed of four proteins: P, T, L and H. The cofactor is (R)-lipoate.

The glycine cleavage system catalyzes the degradation of glycine. The H protein shuttles the methylamine group of glycine from the P protein to the T protein. This is Probable glycine cleavage system H protein 2 from Sulfolobus acidocaldarius (strain ATCC 33909 / DSM 639 / JCM 8929 / NBRC 15157 / NCIMB 11770).